We begin with the raw amino-acid sequence, 405 residues long: GTPase Obg (405 aa).

An Obg domain is found at 1–159; it reads MKFVDEVSIF…RDLKLELKVL (159 aa). The segment at 127–148 is disordered; it reads NTRFKSSTNRAPRQTTPGKPGE. Positions 129–143 are enriched in polar residues; it reads RFKSSTNRAPRQTTP. In terms of domain architecture, OBG-type G spans 160–333; that stretch reads ADVGLLGLPN…LCQDIMHYLD (174 aa). Residues 166-173, 191-195, 213-216, 283-286, and 314-316 contribute to the GTP site; these read GLPNAGKS, FTTLV, DIPG, NKAD, and SAL. Mg(2+) contacts are provided by Ser-173 and Thr-193. Acidic residues predominate over residues 383 to 398; that stretch reads ALEDEDDFDDEDDGDG. The segment at 383–405 is disordered; the sequence is ALEDEDDFDDEDDGDGPEIFYVR.

This sequence belongs to the TRAFAC class OBG-HflX-like GTPase superfamily. OBG GTPase family. As to quaternary structure, monomer. The cofactor is Mg(2+).

Its subcellular location is the cytoplasm. In terms of biological role, an essential GTPase which binds GTP, GDP and possibly (p)ppGpp with moderate affinity, with high nucleotide exchange rates and a fairly low GTP hydrolysis rate. Plays a role in control of the cell cycle, stress response, ribosome biogenesis and in those bacteria that undergo differentiation, in morphogenesis control. The polypeptide is GTPase Obg (Azotobacter vinelandii (strain DJ / ATCC BAA-1303)).